The sequence spans 305 residues: Methionyl-tRNA formyltransferase (305 aa).

A (6S)-5,6,7,8-tetrahydrofolate-binding site is contributed by Ser111–Pro114.

The protein belongs to the Fmt family.

The enzyme catalyses L-methionyl-tRNA(fMet) + (6R)-10-formyltetrahydrofolate = N-formyl-L-methionyl-tRNA(fMet) + (6S)-5,6,7,8-tetrahydrofolate + H(+). Functionally, attaches a formyl group to the free amino group of methionyl-tRNA(fMet). The formyl group appears to play a dual role in the initiator identity of N-formylmethionyl-tRNA by promoting its recognition by IF2 and preventing the misappropriation of this tRNA by the elongation apparatus. The protein is Methionyl-tRNA formyltransferase of Campylobacter jejuni subsp. jejuni serotype O:23/36 (strain 81-176).